The sequence spans 355 residues: Putative beta-lactamase HcpE (355 aa).

Residues 1 to 22 (MGVKFLKILVCGLFFWSLNAHL) form the signal peptide. TPR repeat units follow at residues 27 to 60 (DNSF…GVSE), 63 to 96 (TQLG…DDRE), 98 to 131 (CFGL…LKHP), 132 to 166 (ESCY…DMAK), 202 to 240 (GQAC…NNSG), 245 to 275 (LGSM…MGSA), 276 to 311 (VSCS…MGDE), and 312 to 344 (VGCF…GMKQ). Intrachain disulfides connect cysteine 54–cysteine 62, cysteine 90–cysteine 98, cysteine 126–cysteine 134, cysteine 160–cysteine 168, cysteine 197–cysteine 205, cysteine 234–cysteine 242, cysteine 270–cysteine 278, cysteine 306–cysteine 314, and cysteine 338–cysteine 346.

This sequence belongs to the hcp beta-lactamase family.

It is found in the secreted. It carries out the reaction a beta-lactam + H2O = a substituted beta-amino acid. Functionally, may hydrolyze 6-aminopenicillinic acid and 7-aminocephalosporanic acid (ACA) derivatives. The polypeptide is Putative beta-lactamase HcpE (hcpE) (Helicobacter pylori (strain ATCC 700392 / 26695) (Campylobacter pylori)).